The primary structure comprises 198 residues: Recombination protein RecR (198 aa).

The C4-type zinc finger occupies 57–72 (CSVCGHITENDPCYIC). A Toprim domain is found at 80–175 (SVICVVEDDK…KVTRLAQGLS (96 aa)).

This sequence belongs to the RecR family.

Functionally, may play a role in DNA repair. It seems to be involved in an RecBC-independent recombinational process of DNA repair. It may act with RecF and RecO. The sequence is that of Recombination protein RecR from Staphylococcus aureus (strain JH1).